Reading from the N-terminus, the 1132-residue chain is Tyrosine-protein kinase JAK2 (1132 aa).

Positions 1 to 239 (MGMACLTMTE…RYRFRRFIQQ (239 aa)) are interaction with cytokine/interferon/growth hormone receptors. One can recognise an FERM domain in the interval 37 to 380 (PVLQVYLYHS…GYYRLTADAH (344 aa)). Y119 is modified (phosphotyrosine; by autocatalysis). 2 positions are modified to phosphotyrosine: Y372 and Y373. The SH2; atypical domain occupies 401–482 (HGPISMDFAI…SLKDLLNCYQ (82 aa)). Phosphoserine is present on S523. The Protein kinase 1 domain occupies 545–809 (LIFNESLGQG…AIIRDLNSLF (265 aa)). A phosphotyrosine mark is found at Y570 and Y813. A Protein kinase 2 domain is found at 849-1124 (LKFLQQLGKG…SFRDLALRVD (276 aa)). ATP is bound at residue 855 to 863 (LGKGNFGSV). Y868 is modified (phosphotyrosine; by autocatalysis). Position 882 (K882) interacts with ATP. Phosphotyrosine; by autocatalysis is present on residues Y966 and Y972. The active-site Proton acceptor is D976. A phosphotyrosine; by autocatalysis mark is found at Y1007 and Y1008.

Belongs to the protein kinase superfamily. Tyr protein kinase family. JAK subfamily. As to quaternary structure, interacts with EPOR, LYN, SIRPA, SH2B1 and TEC. Interacts with IL23R. Interacts with SKB1. Interacts with STAM2. Interacts with IFNGR2 (via intracellular domain). Interacts with LEPR (Isoform B). Interacts with HSP90AB1; promotes functional activation in a heat shock-dependent manner. Interacts with STRA6. Interacts with RHEX; this interaction occurs in a erythropoietin (EPO)-dependent manner. Interacts with ASB2; the interaction targets JAK2 for Notch-induced proteasomal degradation. Interacts with MPL/TPOR. Requires Mg(2+) as cofactor. In terms of processing, autophosphorylated, leading to regulate its activity. Leptin promotes phosphorylation on tyrosine residues, including phosphorylation on Tyr-813. Autophosphorylation on Tyr-119 in response to EPO down-regulates its kinase activity. Autophosphorylation on Tyr-868, Tyr-966 and Tyr-972 in response to growth hormone (GH) are required for maximal kinase activity. Also phosphorylated by TEC. Phosphorylated on tyrosine residues in response to interferon gamma signaling. Phosphorylated on tyrosine residues in response to a signaling cascade that is activated by increased cellular retinol. Post-translationally, undergoes Notch-induced ubiquitination and subsequent proteasomal degradation which is mediated by ASB1 or ASB2, the substrate-recognition components of probable ECS E3 ubiquitin-protein ligase complexes. In terms of tissue distribution, ubiquitously expressed throughout most tissues.

The protein localises to the endomembrane system. It is found in the cytoplasm. Its subcellular location is the nucleus. It catalyses the reaction L-tyrosyl-[protein] + ATP = O-phospho-L-tyrosyl-[protein] + ADP + H(+). Its activity is regulated as follows. Regulated by autophosphorylation, can both activate or decrease activity. Heme regulates its activity by enhancing the phosphorylation on Tyr-1007 and Tyr-1008. Non-receptor tyrosine kinase involved in various processes such as cell growth, development, differentiation or histone modifications. Mediates essential signaling events in both innate and adaptive immunity. In the cytoplasm, plays a pivotal role in signal transduction via its association with type I receptors such as growth hormone (GHR), prolactin (PRLR), leptin (LEPR), erythropoietin (EPOR), thrombopoietin receptor (MPL/TPOR); or type II receptors including IFN-alpha, IFN-beta, IFN-gamma and multiple interleukins. Following ligand-binding to cell surface receptors, phosphorylates specific tyrosine residues on the cytoplasmic tails of the receptor, creating docking sites for STATs proteins. Subsequently, phosphorylates the STATs proteins once they are recruited to the receptor. Phosphorylated STATs then form homodimer or heterodimers and translocate to the nucleus to activate gene transcription. For example, cell stimulation with erythropoietin (EPO) during erythropoiesis leads to JAK2 autophosphorylation, activation, and its association with erythropoietin receptor (EPOR) that becomes phosphorylated in its cytoplasmic domain. Then, STAT5 (STAT5A or STAT5B) is recruited, phosphorylated and activated by JAK2. Once activated, dimerized STAT5 translocates into the nucleus and promotes the transcription of several essential genes involved in the modulation of erythropoiesis. Part of a signaling cascade that is activated by increased cellular retinol and that leads to the activation of STAT5 (STAT5A or STAT5B). In addition, JAK2 mediates angiotensin-2-induced ARHGEF1 phosphorylation. Plays a role in cell cycle by phosphorylating CDKN1B. Cooperates with TEC through reciprocal phosphorylation to mediate cytokine-driven activation of FOS transcription. In the nucleus, plays a key role in chromatin by specifically mediating phosphorylation of 'Tyr-41' of histone H3 (H3Y41ph), a specific tag that promotes exclusion of CBX5 (HP1 alpha) from chromatin. Up-regulates the potassium voltage-gated channel activity of KCNA3. The chain is Tyrosine-protein kinase JAK2 from Homo sapiens (Human).